Here is a 451-residue protein sequence, read N- to C-terminus: UDP-N-acetyl-alpha-D-muramoyl-L-alanyl-L-glutamate epimerase (451 aa).

Belongs to the MurL family.

The enzyme catalyses UDP-N-acetyl-alpha-D-muramoyl-L-alanyl-L-glutamate + ATP + H2O = UDP-N-acetyl-alpha-D-muramoyl-L-alanyl-D-glutamate + AMP + diphosphate + H(+). It participates in cell wall biogenesis; peptidoglycan biosynthesis. Cell wall formation. Catalyzes epimerization of the terminal L-glutamate in UDP-N-acetyl-alpha-D-muramoyl-L-alanyl-L-glutamate. This is UDP-N-acetyl-alpha-D-muramoyl-L-alanyl-L-glutamate epimerase from Xanthomonas oryzae pv. oryzae (strain MAFF 311018).